Reading from the N-terminus, the 308-residue chain is GMP synthase [glutamine-hydrolyzing] subunit B (308 aa).

The GMPS ATP-PPase domain maps to L2–R183. Position 29–35 (S29–S35) interacts with ATP.

Heterodimer composed of a glutamine amidotransferase subunit (A) and a GMP-binding subunit (B).

It catalyses the reaction XMP + L-glutamine + ATP + H2O = GMP + L-glutamate + AMP + diphosphate + 2 H(+). Its pathway is purine metabolism; GMP biosynthesis; GMP from XMP (L-Gln route): step 1/1. Functionally, catalyzes the synthesis of GMP from XMP. The polypeptide is GMP synthase [glutamine-hydrolyzing] subunit B (guaAB) (Methanothermobacter thermautotrophicus (strain ATCC 29096 / DSM 1053 / JCM 10044 / NBRC 100330 / Delta H) (Methanobacterium thermoautotrophicum)).